A 363-amino-acid chain; its full sequence is S-adenosylmethionine:tRNA ribosyltransferase-isomerase (363 aa).

This sequence belongs to the QueA family. In terms of assembly, monomer.

Its subcellular location is the cytoplasm. It carries out the reaction 7-aminomethyl-7-carbaguanosine(34) in tRNA + S-adenosyl-L-methionine = epoxyqueuosine(34) in tRNA + adenine + L-methionine + 2 H(+). It participates in tRNA modification; tRNA-queuosine biosynthesis. Functionally, transfers and isomerizes the ribose moiety from AdoMet to the 7-aminomethyl group of 7-deazaguanine (preQ1-tRNA) to give epoxyqueuosine (oQ-tRNA). This chain is S-adenosylmethionine:tRNA ribosyltransferase-isomerase, found in Brucella anthropi (strain ATCC 49188 / DSM 6882 / CCUG 24695 / JCM 21032 / LMG 3331 / NBRC 15819 / NCTC 12168 / Alc 37) (Ochrobactrum anthropi).